A 357-amino-acid chain; its full sequence is Probable butyrate kinase 1 (357 aa).

This sequence belongs to the acetokinase family.

The protein resides in the cytoplasm. It catalyses the reaction butanoate + ATP = butanoyl phosphate + ADP. The sequence is that of Probable butyrate kinase 1 from Caldanaerobacter subterraneus subsp. tengcongensis (strain DSM 15242 / JCM 11007 / NBRC 100824 / MB4) (Thermoanaerobacter tengcongensis).